The following is a 156-amino-acid chain: Ribosomal RNA large subunit methyltransferase H (156 aa).

S-adenosyl-L-methionine-binding positions include Leu73, Gly104, and 123-128 (LSPLTL).

The protein belongs to the RNA methyltransferase RlmH family. As to quaternary structure, homodimer.

The protein resides in the cytoplasm. The enzyme catalyses pseudouridine(1915) in 23S rRNA + S-adenosyl-L-methionine = N(3)-methylpseudouridine(1915) in 23S rRNA + S-adenosyl-L-homocysteine + H(+). Its function is as follows. Specifically methylates the pseudouridine at position 1915 (m3Psi1915) in 23S rRNA. In Aliivibrio fischeri (strain MJ11) (Vibrio fischeri), this protein is Ribosomal RNA large subunit methyltransferase H.